Reading from the N-terminus, the 239-residue chain is Large ribosomal subunit protein uL3 (239 aa).

2 disordered regions span residues 140 to 166 and 211 to 239; these read SHRS…PGHM and PLPK…QEGA. An N5-methylglutamine modification is found at Gln151.

It belongs to the universal ribosomal protein uL3 family. Part of the 50S ribosomal subunit. Forms a cluster with proteins L14 and L19. In terms of processing, methylated by PrmB.

One of the primary rRNA binding proteins, it binds directly near the 3'-end of the 23S rRNA, where it nucleates assembly of the 50S subunit. The sequence is that of Large ribosomal subunit protein uL3 from Bradyrhizobium sp. (strain BTAi1 / ATCC BAA-1182).